Consider the following 280-residue polypeptide: Probable 6-phosphogluconolactonase 2 (280 aa).

It belongs to the glucosamine/galactosamine-6-phosphate isomerase family. 6-phosphogluconolactonase subfamily.

The catalysed reaction is 6-phospho-D-glucono-1,5-lactone + H2O = 6-phospho-D-gluconate + H(+). The protein operates within carbohydrate degradation; pentose phosphate pathway; D-ribulose 5-phosphate from D-glucose 6-phosphate (oxidative stage): step 2/3. Its function is as follows. Hydrolysis of 6-phosphogluconolactone to 6-phosphogluconate. The sequence is that of Probable 6-phosphogluconolactonase 2 from Oryza sativa subsp. indica (Rice).